A 509-amino-acid chain; its full sequence is Cardiolipin synthase 1 (509 aa).

The next 3 membrane-spanning stretches (helical) occupy residues 4–24, 30–50, and 59–79; these read PIIQ…LLNT, YTFV…VIFI, and LAWF…YSIF. 2 PLD phosphodiesterase domains span residues 238–265 and 422–449; these read VNYR…GDEY and KDGF…DVRS. Active-site residues include histidine 243, lysine 245, aspartate 250, histidine 427, lysine 429, and aspartate 434.

This sequence belongs to the phospholipase D family. Cardiolipin synthase subfamily.

The protein localises to the cell membrane. The enzyme catalyses 2 a 1,2-diacyl-sn-glycero-3-phospho-(1'-sn-glycerol) = a cardiolipin + glycerol. Catalyzes the reversible phosphatidyl group transfer from one phosphatidylglycerol molecule to another to form cardiolipin (CL) (diphosphatidylglycerol) and glycerol. This is Cardiolipin synthase 1 (cls1) from Bacillus anthracis.